The following is a 62-amino-acid chain: Conotoxin Qc5.2 (62 aa).

The N-terminal stretch at 1-22 is a signal peptide; it reads MRCVPVFIILLLLSPSAPSVDA. A propeptide spanning residues 23–48 is cleaved from the precursor; it reads HPMTKDDVPQASLHDDAKRTLQVPWM. At Val60 the chain carries Valine amide.

It belongs to the conotoxin T superfamily. Contains 2 disulfide bonds that can be either 'C1-C3, C2-C4' or 'C1-C4, C2-C3', since these disulfide connectivities have been observed for conotoxins with cysteine framework V (for examples, see AC P0DQQ7 and AC P81755). As to expression, expressed by the venom duct.

The protein localises to the secreted. The chain is Conotoxin Qc5.2 from Conus quercinus (Oak cone).